The sequence spans 643 residues: Phosphatidylinositol-3,5-bisphosphate 3-phosphatase MTMR2 (643 aa).

Polar residues-rich tracts occupy residues 1-12 (MEKSSSCESLGS) and 23-40 (DSLSSASTSHSENSVHTK). The tract at residues 1-56 (MEKSSSCESLGSQPAAARPPSVDSLSSASTSHSENSVHTKSASVVSSDSISTSADN) is disordered. 2 positions are modified to phosphoserine: S6 and S9. Residues 41–55 (SASVVSSDSISTSAD) are compositionally biased toward low complexity. Phosphoserine is present on S58. Residues 68–139 (NKLAEMEEPP…GVINRVEKIG (72 aa)) enclose the GRAM domain. The 376-residue stretch at 205-580 (GWKLYDPLLE…RHLELWVGYY (376 aa)) folds into the Myotubularin phosphatase domain. A 1,2-diacyl-sn-glycero-3-phospho-(1D-myo-inositol-3,5-bisphosphate) contacts are provided by N330, N355, and I356. The a 1,2-diacyl-sn-glycero-3-phospho-(1D-myo-inositol-3-phosphate) site is built by N330, N355, and I356. C417 acts as the Phosphocysteine intermediate in catalysis. The a 1,2-diacyl-sn-glycero-3-phospho-(1D-myo-inositol-3,5-bisphosphate) site is built by S418, D419, G420, W421, D422, R423, R459, and R463. S418, D419, G420, W421, D422, and R423 together coordinate a 1,2-diacyl-sn-glycero-3-phospho-(1D-myo-inositol-3-phosphate). Position 463 (R463) interacts with a 1,2-diacyl-sn-glycero-3-phospho-(1D-myo-inositol-3-phosphate). The stretch at 593-627 (IHNRYKELLAKRAELQKKVEELQREISNRSTSSSE) forms a coiled coil. Residues 615–643 (QREISNRSTSSSERASSPAQCVTPVQTVV) are disordered. Positions 620–631 (NRSTSSSERASS) are enriched in low complexity. The segment covering 632 to 643 (PAQCVTPVQTVV) has biased composition (polar residues).

It belongs to the protein-tyrosine phosphatase family. Non-receptor class myotubularin subfamily. As to quaternary structure, homodimer (via coiled-coil domain). Heterotetramer consisting of one MTMR2 dimer and one SBF2/MTMR13 dimer; specifically in peripheral nerves stabilizes SBF2/MTMR13 at the membranes and increases MTMR2 catalytic activity towards phosphatidylinositol 3,5-bisphosphate and to a lesser extent towards phosphatidylinositol 3-phosphate. Heterodimer with SBF1/MTMR5; acts as an adapter for the phosphatase MTMR2 to regulate MTMR2 catalytic activity and subcellular location. Heterodimer with MTMR12. Phosphorylation at Ser-58 decreases MTMR2 localization to endocytic vesicular structures.

It localises to the cytoplasm. The protein localises to the early endosome membrane. It is found in the perinuclear region. Its subcellular location is the cell projection. The protein resides in the axon. It localises to the endosome membrane. The enzyme catalyses a 1,2-diacyl-sn-glycero-3-phospho-(1D-myo-inositol-3,5-bisphosphate) + H2O = a 1,2-diacyl-sn-glycero-3-phospho-(1D-myo-inositol-5-phosphate) + phosphate. It catalyses the reaction a 1,2-diacyl-sn-glycero-3-phospho-(1D-myo-inositol-3-phosphate) + H2O = a 1,2-diacyl-sn-glycero-3-phospho-(1D-myo-inositol) + phosphate. It carries out the reaction 1,2-dioctanoyl-sn-glycero-3-phospho-(1-D-myo-inositol-3-phosphate) + H2O = 1,2-dioctanoyl-sn-glycero-3-phospho-(1D-myo-inositol) + phosphate. The catalysed reaction is 1,2-dioctanoyl-sn-glycero-3-phospho-(1D-myo-inositol-3,5-bisphosphate) + H2O = 1,2-dioctanoyl-sn-glycero-3-phospho-(1D-myo-inositol-5-phosphate) + phosphate. In terms of biological role, lipid phosphatase that specifically dephosphorylates the D-3 position of phosphatidylinositol 3-phosphate and phosphatidylinositol 3,5-bisphosphate, generating phosphatidylinositol and phosphatidylinositol 5-phosphate. Regulates the level of these phosphoinositides critical for various biological processes including autophagy initiation and autophagosome maturation. This chain is Phosphatidylinositol-3,5-bisphosphate 3-phosphatase MTMR2, found in Homo sapiens (Human).